The following is a 507-amino-acid chain: UDP-N-acetylhexosamine pyrophosphorylase-like protein 1 (507 aa).

A disordered region spans residues 56-91 (ACARPHGPPPDLAARLRPLPPERVGRASRSDPETRR). Over residues 78–91 (RVGRASRSDPETRR) the composition is skewed to basic and acidic residues. A Substrate binding motif is present at residues 111–114 (LAGG). Residues 111–114 (LAGG), lysine 125, glutamine 199, and glycine 225 contribute to the UTP site. Asparagine 226 contributes to the substrate binding site. Aspartate 256 contributes to the UTP binding site. The short motif at 306-307 (EY) is the Substrate binding element. UTP is bound at residue lysine 380. Lysine 410 serves as a coordination point for substrate.

Belongs to the UDPGP type 1 family.

In Homo sapiens (Human), this protein is UDP-N-acetylhexosamine pyrophosphorylase-like protein 1 (UAP1L1).